The primary structure comprises 196 residues: Imidazole glycerol phosphate synthase subunit HisH (196 aa).

One can recognise a Glutamine amidotransferase type-1 domain in the interval 2-196 (NVVIVDTECA…LKRFLELTLC (195 aa)). The Nucleophile role is filled by Cys77. Residues His175 and Glu177 contribute to the active site.

Heterodimer of HisH and HisF.

It is found in the cytoplasm. It carries out the reaction 5-[(5-phospho-1-deoxy-D-ribulos-1-ylimino)methylamino]-1-(5-phospho-beta-D-ribosyl)imidazole-4-carboxamide + L-glutamine = D-erythro-1-(imidazol-4-yl)glycerol 3-phosphate + 5-amino-1-(5-phospho-beta-D-ribosyl)imidazole-4-carboxamide + L-glutamate + H(+). It catalyses the reaction L-glutamine + H2O = L-glutamate + NH4(+). Its pathway is amino-acid biosynthesis; L-histidine biosynthesis; L-histidine from 5-phospho-alpha-D-ribose 1-diphosphate: step 5/9. IGPS catalyzes the conversion of PRFAR and glutamine to IGP, AICAR and glutamate. The HisH subunit catalyzes the hydrolysis of glutamine to glutamate and ammonia as part of the synthesis of IGP and AICAR. The resulting ammonia molecule is channeled to the active site of HisF. The chain is Imidazole glycerol phosphate synthase subunit HisH from Idiomarina loihiensis (strain ATCC BAA-735 / DSM 15497 / L2-TR).